The following is a 269-amino-acid chain: Tetrahydromethanopterin S-methyltransferase subunit C (269 aa).

Helical transmembrane passes span 18–38 (VLVI…FVPS), 39–59 (LAML…ANTT), 62–82 (VAAY…LGMG), 84–104 (ISAL…ALPF), 106–126 (LVLA…FIVG), 152–172 (ALAI…DLII), 180–200 (IIAL…NACI), and 222–242 (LVFS…VFWI).

Belongs to the MtrC family. As to quaternary structure, the complex is composed of 8 subunits; MtrA, MtrB, MtrC, MtrD, MtrE, MtrF, MtrG and MtrH.

Its subcellular location is the cell membrane. The catalysed reaction is 5-methyl-5,6,7,8-tetrahydromethanopterin + coenzyme M + 2 Na(+)(in) = 5,6,7,8-tetrahydromethanopterin + methyl-coenzyme M + 2 Na(+)(out). Its pathway is one-carbon metabolism; methanogenesis from CO(2); methyl-coenzyme M from 5,10-methylene-5,6,7,8-tetrahydromethanopterin: step 2/2. In terms of biological role, part of a complex that catalyzes the formation of methyl-coenzyme M and tetrahydromethanopterin from coenzyme M and methyl-tetrahydromethanopterin. This is an energy-conserving, sodium-ion translocating step. The polypeptide is Tetrahydromethanopterin S-methyltransferase subunit C (Methanococcus vannielii (strain ATCC 35089 / DSM 1224 / JCM 13029 / OCM 148 / SB)).